The sequence spans 59 residues: Photosystem II reaction center protein K (59 aa).

Positions 1 to 22 (MLNIFSLIGLNSALYSSSCFFA) are excised as a propeptide. A helical membrane pass occupies residues 30–50 (FLSPIVDFMPVIPLLFFLLAF).

The protein belongs to the PsbK family. PSII is composed of 1 copy each of membrane proteins PsbA, PsbB, PsbC, PsbD, PsbE, PsbF, PsbH, PsbI, PsbJ, PsbK, PsbL, PsbM, PsbT, PsbX, PsbY, PsbZ, Psb30/Ycf12, at least 3 peripheral proteins of the oxygen-evolving complex and a large number of cofactors. It forms dimeric complexes.

It is found in the plastid. Its subcellular location is the chloroplast thylakoid membrane. One of the components of the core complex of photosystem II (PSII). PSII is a light-driven water:plastoquinone oxidoreductase that uses light energy to abstract electrons from H(2)O, generating O(2) and a proton gradient subsequently used for ATP formation. It consists of a core antenna complex that captures photons, and an electron transfer chain that converts photonic excitation into a charge separation. This Silene latifolia (White campion) protein is Photosystem II reaction center protein K.